Here is a 546-residue protein sequence, read N- to C-terminus: MSSRQTLASWKKLQLLAQDKKSQHMNTLFAQDSERFNKFSIELPNMLLDYSKNLIDTETLDALLALAEETQVCDWRAKMFAGEKINKTEDRAVLHTALRRQSDEAFIIEGENVTEHVKNQLAEMEVFVNKVRQGHWLGYSGKRITDIVNIGVGGSNLGPQMVTEALKHYSDGSVNVHYVSNVDGAQIAEVLRPLEPEKVLFIVSSKTFTTTETMTNARTAINWLTSASFDENSVAKHFVAVTANKENAMSFGIEEQNIFDMWDWVGGRFSLWSAIGLAIALDLGFDKFEELLAGAHDMDQHFINAPLKDNFPAILALISVWNTTFLGSQSQAILPYDQTLHMLTAYLQQAEMESNGKSVSWDGDEIDYATVPSIWGELGINGQHAFYQYLHQSNNVVPADFIGSVKSVTPVKGHHETLMANFFAQTQALMVGVNEEQVRADLKAKGRNAEYIDNVAPHKVHKGNRPTNTILLKCINPRNLGSLIAAYEHKIFVQGIILQICSFDQWGVELGKGLAAEIQTELQTDNISAQHDCSTSSLLKFYQSAK.

The active-site Proton donor is Glu-353. Catalysis depends on residues His-384 and Lys-512.

The protein belongs to the GPI family.

It is found in the cytoplasm. It carries out the reaction alpha-D-glucose 6-phosphate = beta-D-fructose 6-phosphate. Its pathway is carbohydrate biosynthesis; gluconeogenesis. The protein operates within carbohydrate degradation; glycolysis; D-glyceraldehyde 3-phosphate and glycerone phosphate from D-glucose: step 2/4. In terms of biological role, catalyzes the reversible isomerization of glucose-6-phosphate to fructose-6-phosphate. This is Glucose-6-phosphate isomerase 1 from Colwellia psychrerythraea (strain 34H / ATCC BAA-681) (Vibrio psychroerythus).